Here is a 164-residue protein sequence, read N- to C-terminus: Phosphopantetheine adenylyltransferase (164 aa).

Ser-9 is a binding site for substrate. ATP is bound by residues 9 to 10 (SF) and His-17. The substrate site is built by Lys-41, Leu-73, and Lys-87. Residues 88–90 (GLR), Glu-98, and 123–129 (YSYLSSS) each bind ATP.

It belongs to the bacterial CoaD family. In terms of assembly, homohexamer. Requires Mg(2+) as cofactor.

Its subcellular location is the cytoplasm. The catalysed reaction is (R)-4'-phosphopantetheine + ATP + H(+) = 3'-dephospho-CoA + diphosphate. The protein operates within cofactor biosynthesis; coenzyme A biosynthesis; CoA from (R)-pantothenate: step 4/5. Functionally, reversibly transfers an adenylyl group from ATP to 4'-phosphopantetheine, yielding dephospho-CoA (dPCoA) and pyrophosphate. The chain is Phosphopantetheine adenylyltransferase from Clostridium botulinum (strain 657 / Type Ba4).